The following is a 256-amino-acid chain: D-aminoacyl-tRNA deacylase (256 aa).

The protein belongs to the DtdA deacylase family. As to quaternary structure, monomer. The cofactor is Zn(2+).

It catalyses the reaction a D-aminoacyl-tRNA + H2O = a tRNA + a D-alpha-amino acid + H(+). It carries out the reaction glycyl-tRNA(Ala) + H2O = tRNA(Ala) + glycine + H(+). In terms of biological role, D-aminoacyl-tRNA deacylase with broad substrate specificity. By recycling D-aminoacyl-tRNA to D-amino acids and free tRNA molecules, this enzyme counteracts the toxicity associated with the formation of D-aminoacyl-tRNA entities in vivo. The chain is D-aminoacyl-tRNA deacylase from Thermoplasma acidophilum (strain ATCC 25905 / DSM 1728 / JCM 9062 / NBRC 15155 / AMRC-C165).